We begin with the raw amino-acid sequence, 483 residues long: Cysteine--tRNA ligase (483 aa).

Cys28 serves as a coordination point for Zn(2+). The 'HIGH' region motif lies at 30-40 (MTVYDYCHLGH). 3 residues coordinate Zn(2+): Cys212, His237, and Glu241. The 'KMSKS' region motif lies at 269–273 (KMSKS). Residue Lys272 participates in ATP binding.

Belongs to the class-I aminoacyl-tRNA synthetase family. In terms of assembly, monomer. It depends on Zn(2+) as a cofactor.

It localises to the cytoplasm. The catalysed reaction is tRNA(Cys) + L-cysteine + ATP = L-cysteinyl-tRNA(Cys) + AMP + diphosphate. The sequence is that of Cysteine--tRNA ligase from Bordetella avium (strain 197N).